Here is an 89-residue protein sequence, read N- to C-terminus: Small ribosomal subunit protein bS20 (89 aa).

Positions 1–28 are disordered; sequence MTLANIKSAKKRAIQSEKRRQHNASQRS.

This sequence belongs to the bacterial ribosomal protein bS20 family.

Its function is as follows. Binds directly to 16S ribosomal RNA. The sequence is that of Small ribosomal subunit protein bS20 from Pasteurella multocida (strain Pm70).